We begin with the raw amino-acid sequence, 804 residues long: Leucine--tRNA ligase (804 aa).

Positions 40–51 match the 'HIGH' region motif; it reads PYPSGAGLHVGH. Positions 576-580 match the 'KMSKS' region motif; that stretch reads KMSKS. Lysine 579 contacts ATP.

The protein belongs to the class-I aminoacyl-tRNA synthetase family.

It localises to the cytoplasm. It carries out the reaction tRNA(Leu) + L-leucine + ATP = L-leucyl-tRNA(Leu) + AMP + diphosphate. The protein is Leucine--tRNA ligase of Staphylococcus haemolyticus (strain JCSC1435).